Consider the following 422-residue polypeptide: Serine--tRNA ligase (422 aa).

229-231 (TAE) contributes to the L-serine binding site. Position 260 to 262 (260 to 262 (RKE)) interacts with ATP. Residue Glu-283 coordinates L-serine. 347-350 (EISS) is a binding site for ATP. Residue Ser-383 participates in L-serine binding.

The protein belongs to the class-II aminoacyl-tRNA synthetase family. Type-1 seryl-tRNA synthetase subfamily. Homodimer. The tRNA molecule binds across the dimer.

It localises to the cytoplasm. It carries out the reaction tRNA(Ser) + L-serine + ATP = L-seryl-tRNA(Ser) + AMP + diphosphate + H(+). It catalyses the reaction tRNA(Sec) + L-serine + ATP = L-seryl-tRNA(Sec) + AMP + diphosphate + H(+). The protein operates within aminoacyl-tRNA biosynthesis; selenocysteinyl-tRNA(Sec) biosynthesis; L-seryl-tRNA(Sec) from L-serine and tRNA(Sec): step 1/1. Its function is as follows. Catalyzes the attachment of serine to tRNA(Ser). Is also able to aminoacylate tRNA(Sec) with serine, to form the misacylated tRNA L-seryl-tRNA(Sec), which will be further converted into selenocysteinyl-tRNA(Sec). In Geobacter sulfurreducens (strain ATCC 51573 / DSM 12127 / PCA), this protein is Serine--tRNA ligase.